The sequence spans 106 residues: Phosphoribosyl-ATP pyrophosphatase (106 aa).

It belongs to the PRA-PH family.

It localises to the cytoplasm. It carries out the reaction 1-(5-phospho-beta-D-ribosyl)-ATP + H2O = 1-(5-phospho-beta-D-ribosyl)-5'-AMP + diphosphate + H(+). The protein operates within amino-acid biosynthesis; L-histidine biosynthesis; L-histidine from 5-phospho-alpha-D-ribose 1-diphosphate: step 2/9. In Limosilactobacillus fermentum (strain NBRC 3956 / LMG 18251) (Lactobacillus fermentum), this protein is Phosphoribosyl-ATP pyrophosphatase.